The following is a 510-amino-acid chain: Holliday junction branch migration ATPase PINA (510 aa).

Homohexamer. Interacts with Holliday junction resolvase Hjc, interacts with helicase Hjm (Hel308).

It catalyses the reaction ATP + H2O = ADP + phosphate + H(+). Its function is as follows. Important for growth at low temperatures (less than 65 degrees Celsius in this organism). Promotes Holliday junction (HJ) branch migration and unwinds Y-shaped DNA (but not replication forks or dsDNA) in an ATP hydrolysis-dependent manner. Stimulates cleavage by HJ resolvase Hjc. Hjc, Hjm (Hel308) and PINA coordinate HJ migration and cleavage of replication forks in a coordinated way. Probably acts as an ATP-dependent pump that pulls DNA through the hexamer. This Sulfolobus acidocaldarius (strain ATCC 33909 / DSM 639 / JCM 8929 / NBRC 15157 / NCIMB 11770) protein is Holliday junction branch migration ATPase PINA.